The following is a 402-amino-acid chain: Zinc finger protein 322 (402 aa).

A C2H2-type 1; atypical zinc finger spans residues 43-65 (YQCLECKQNFCENLALIMCERTH). 8 consecutive C2H2-type zinc fingers follow at residues 71–93 (YKCD…QRIH), 99–121 (YKCS…QRTH), 127–149 (YTCD…QRSH), 155–177 (YLCS…RRTH), 183–205 (FKCL…QRTH), 211–233 (YKCN…KRVH), 239–261 (YKCG…QRVH), and 267–289 (YKCL…QATH). The C2H2-type 10; degenerate zinc-finger motif lies at 293 to 315 (FKCLEYEKSFNCSSDLIVHQRIH). The segment at 351 to 373 (YKYTVCDKSFHQSSALLQHQTVH) adopts a C2H2-type 11; degenerate zinc-finger fold. Serine 391 carries the post-translational modification Phosphoserine.

Belongs to the krueppel C2H2-type zinc-finger protein family. As to quaternary structure, interacts with POU5F1.

The protein localises to the cytoplasm. It localises to the nucleus. Its function is as follows. Transcriptional activator. Important for maintenance of pluripotency in embryonic stem cells. Binds directly to the POU5F1 distal enhancer and the NANOG proximal promoter, and enhances expression of both genes. Can also bind to numerous other gene promoters and regulates expression of many other pluripotency factors, either directly or indirectly. Promotes inhibition of MAPK signaling during embryonic stem cell differentiation. The chain is Zinc finger protein 322 (ZNF322) from Macaca fascicularis (Crab-eating macaque).